Reading from the N-terminus, the 338-residue chain is Holliday junction branch migration complex subunit RuvB (338 aa).

The tract at residues 1–181 (MEERILTQNF…FGVINRLDYY (181 aa)) is large ATPase domain (RuvB-L). ATP contacts are provided by residues Leu20, Arg21, Gly62, Lys65, Thr66, Thr67, 128 to 130 (EDF), Arg171, Tyr181, and Arg218. Thr66 contributes to the Mg(2+) binding site. Residues 182-252 (SVEELKEIIK…TSKEALDVLG (71 aa)) form a small ATPAse domain (RuvB-S) region. Positions 255–338 (EIGLEYIDRK…YIEQGRIEGV (84 aa)) are head domain (RuvB-H). DNA contacts are provided by Arg310 and Arg315.

This sequence belongs to the RuvB family. In terms of assembly, homohexamer. Forms an RuvA(8)-RuvB(12)-Holliday junction (HJ) complex. HJ DNA is sandwiched between 2 RuvA tetramers; dsDNA enters through RuvA and exits via RuvB. An RuvB hexamer assembles on each DNA strand where it exits the tetramer. Each RuvB hexamer is contacted by two RuvA subunits (via domain III) on 2 adjacent RuvB subunits; this complex drives branch migration. In the full resolvosome a probable DNA-RuvA(4)-RuvB(12)-RuvC(2) complex forms which resolves the HJ.

It is found in the cytoplasm. It carries out the reaction ATP + H2O = ADP + phosphate + H(+). Its function is as follows. The RuvA-RuvB-RuvC complex processes Holliday junction (HJ) DNA during genetic recombination and DNA repair, while the RuvA-RuvB complex plays an important role in the rescue of blocked DNA replication forks via replication fork reversal (RFR). RuvA specifically binds to HJ cruciform DNA, conferring on it an open structure. The RuvB hexamer acts as an ATP-dependent pump, pulling dsDNA into and through the RuvAB complex. RuvB forms 2 homohexamers on either side of HJ DNA bound by 1 or 2 RuvA tetramers; 4 subunits per hexamer contact DNA at a time. Coordinated motions by a converter formed by DNA-disengaged RuvB subunits stimulates ATP hydrolysis and nucleotide exchange. Immobilization of the converter enables RuvB to convert the ATP-contained energy into a lever motion, pulling 2 nucleotides of DNA out of the RuvA tetramer per ATP hydrolyzed, thus driving DNA branch migration. The RuvB motors rotate together with the DNA substrate, which together with the progressing nucleotide cycle form the mechanistic basis for DNA recombination by continuous HJ branch migration. Branch migration allows RuvC to scan DNA until it finds its consensus sequence, where it cleaves and resolves cruciform DNA. The sequence is that of Holliday junction branch migration complex subunit RuvB from Thermoanaerobacter pseudethanolicus (strain ATCC 33223 / 39E) (Clostridium thermohydrosulfuricum).